The sequence spans 398 residues: 1-deoxy-D-xylulose 5-phosphate reductoisomerase (398 aa).

Residues Thr-11, Gly-12, Ser-13, Ile-14, Arg-38, Asn-39, and Asn-125 each coordinate NADPH. 1-deoxy-D-xylulose 5-phosphate is bound at residue Lys-126. Residue Glu-127 participates in NADPH binding. Asp-151 is a binding site for Mn(2+). 1-deoxy-D-xylulose 5-phosphate is bound by residues Ser-152, Glu-153, Ser-179, and His-202. A Mn(2+)-binding site is contributed by Glu-153. Residue Gly-208 participates in NADPH binding. Positions 215, 220, 221, and 224 each coordinate 1-deoxy-D-xylulose 5-phosphate. Mn(2+) is bound at residue Glu-224.

This sequence belongs to the DXR family. Mg(2+) serves as cofactor. Mn(2+) is required as a cofactor.

It carries out the reaction 2-C-methyl-D-erythritol 4-phosphate + NADP(+) = 1-deoxy-D-xylulose 5-phosphate + NADPH + H(+). It functions in the pathway isoprenoid biosynthesis; isopentenyl diphosphate biosynthesis via DXP pathway; isopentenyl diphosphate from 1-deoxy-D-xylulose 5-phosphate: step 1/6. Catalyzes the NADPH-dependent rearrangement and reduction of 1-deoxy-D-xylulose-5-phosphate (DXP) to 2-C-methyl-D-erythritol 4-phosphate (MEP). The chain is 1-deoxy-D-xylulose 5-phosphate reductoisomerase from Burkholderia pseudomallei (strain 1106a).